Consider the following 253-residue polypeptide: Ubiquinone/menaquinone biosynthesis C-methyltransferase UbiE (253 aa).

Residues Thr-76, Asp-97, 125-126 (NA), and Ser-142 contribute to the S-adenosyl-L-methionine site.

It belongs to the class I-like SAM-binding methyltransferase superfamily. MenG/UbiE family.

The enzyme catalyses a 2-demethylmenaquinol + S-adenosyl-L-methionine = a menaquinol + S-adenosyl-L-homocysteine + H(+). The catalysed reaction is a 2-methoxy-6-(all-trans-polyprenyl)benzene-1,4-diol + S-adenosyl-L-methionine = a 5-methoxy-2-methyl-3-(all-trans-polyprenyl)benzene-1,4-diol + S-adenosyl-L-homocysteine + H(+). Its pathway is quinol/quinone metabolism; menaquinone biosynthesis; menaquinol from 1,4-dihydroxy-2-naphthoate: step 2/2. The protein operates within cofactor biosynthesis; ubiquinone biosynthesis. Methyltransferase required for the conversion of demethylmenaquinol (DMKH2) to menaquinol (MKH2) and the conversion of 2-polyprenyl-6-methoxy-1,4-benzoquinol (DDMQH2) to 2-polyprenyl-3-methyl-6-methoxy-1,4-benzoquinol (DMQH2). The protein is Ubiquinone/menaquinone biosynthesis C-methyltransferase UbiE of Xanthomonas axonopodis pv. citri (strain 306).